The chain runs to 222 residues: Cytidylate kinase (222 aa).

10-18 is a binding site for ATP; sequence GPAGSGKSS.

This sequence belongs to the cytidylate kinase family. Type 1 subfamily.

It localises to the cytoplasm. It carries out the reaction CMP + ATP = CDP + ADP. It catalyses the reaction dCMP + ATP = dCDP + ADP. In Acholeplasma laidlawii (strain PG-8A), this protein is Cytidylate kinase.